A 259-amino-acid polypeptide reads, in one-letter code: Hydroxyacylglutathione hydrolase (259 aa).

Zn(2+)-binding residues include His56, His58, Asp60, His61, His112, Asp133, and His171.

This sequence belongs to the metallo-beta-lactamase superfamily. Glyoxalase II family. As to quaternary structure, monomer. Zn(2+) is required as a cofactor.

It catalyses the reaction an S-(2-hydroxyacyl)glutathione + H2O = a 2-hydroxy carboxylate + glutathione + H(+). Its pathway is secondary metabolite metabolism; methylglyoxal degradation; (R)-lactate from methylglyoxal: step 2/2. Its function is as follows. Thiolesterase that catalyzes the hydrolysis of S-D-lactoyl-glutathione to form glutathione and D-lactic acid. The chain is Hydroxyacylglutathione hydrolase from Pseudomonas putida (strain ATCC 47054 / DSM 6125 / CFBP 8728 / NCIMB 11950 / KT2440).